The chain runs to 425 residues: Protein CLP1 homolog (425 aa).

ATP-binding positions include Glu-18, Lys-59, and 121–126; that span reads DVGKST.

It belongs to the Clp1 family. Clp1 subfamily.

The protein resides in the nucleus. Required for endonucleolytic cleavage during polyadenylation-dependent pre-mRNA 3'-end formation. The sequence is that of Protein CLP1 homolog (cbc) from Drosophila grimshawi (Hawaiian fruit fly).